Here is a 528-residue protein sequence, read N- to C-terminus: Tyrosine-protein kinase transforming protein Yes (528 aa).

Positions 1–12 (DKGPAMKYRTDN) are enriched in basic and acidic residues. The disordered stretch occupies residues 1–35 (DKGPAMKYRTDNTPEPISSHVSHYGSDSSQATQSP). A compositionally biased stretch (low complexity) spans 18 to 29 (SSHVSHYGSDSS). Positions 81–142 (GGGTVFVALY…PSNYVAPADS (62 aa)) constitute an SH3 domain. Residues 148–245 (WYFGKMGRKD…GLCHKLTTVC (98 aa)) form the SH2 domain. The region spanning 267–520 (LRLEVKLGQG…YIQSFLEDYF (254 aa)) is the Protein kinase domain. ATP contacts are provided by residues 273–281 (LGQGCFGEV) and Lys295. Asp386 serves as the catalytic Proton acceptor. Tyr416 carries the phosphotyrosine; by autocatalysis modification.

The protein belongs to the protein kinase superfamily. Tyr protein kinase family. SRC subfamily.

The enzyme catalyses L-tyrosyl-[protein] + ATP = O-phospho-L-tyrosyl-[protein] + ADP + H(+). This is Tyrosine-protein kinase transforming protein Yes (V-YES) from Galliformes (Y73SV).